Here is a 141-residue protein sequence, read N- to C-terminus: Large ribosomal subunit protein uL16c (141 aa).

Belongs to the universal ribosomal protein uL16 family. As to quaternary structure, part of the 50S ribosomal subunit.

The protein resides in the plastid. It is found in the chloroplast. In Zygnema circumcarinatum (Green alga), this protein is Large ribosomal subunit protein uL16c.